A 461-amino-acid chain; its full sequence is CASP-like protein 4U1 (461 aa).

The segment at 1-239 (MASTPRTPAP…RAAETKLPLS (239 aa)) is disordered. At 1–314 (MASTPRTPAP…AAVAVGERRE (314 aa)) the chain is on the cytoplasmic side. The segment covering 7–69 (TPAPVRSPPP…PLETPPPPSP (63 aa)) has biased composition (pro residues). 2 stretches are compositionally biased toward low complexity: residues 116 to 126 (LSPMRLAAPRL) and 135 to 155 (TPTG…AAAG). Residues 193–204 (SPSPSPTPPSPL) show a composition bias toward pro residues. Low complexity predominate over residues 205–221 (TPAAAPVVNNNSNNKNN). Residues 315–335 (LSVTLRLATAVLSLAAFSVIA) form a helical membrane-spanning segment. Over 336–354 (SARTSGWAGDYYAHHLQYR) the chain is Extracellular. A helical membrane pass occupies residues 355 to 375 (YAVAVNVIVCAYSIAQSFGEI). Residues 376-392 (RRLISPRFIFRSMSSYY) are Cytoplasmic-facing. The chain crosses the membrane as a helical span at residues 393–413 (CSLFLDQALAYLLMSASSAAA). The Extracellular segment spans residues 414–431 (SRNDLWVSRFGTDAFNRK). The chain crosses the membrane as a helical span at residues 432 to 452 (ITSALWLSFIAFLMLALNALI). Residues 453-461 (STANLFSML) are Cytoplasmic-facing.

Belongs to the Casparian strip membrane proteins (CASP) family. As to quaternary structure, homodimer and heterodimers.

It is found in the cell membrane. The chain is CASP-like protein 4U1 from Sorghum bicolor (Sorghum).